We begin with the raw amino-acid sequence, 256 residues long: Tryptophan synthase alpha chain (256 aa).

Active-site proton acceptor residues include glutamate 51 and aspartate 62.

Belongs to the TrpA family. As to quaternary structure, tetramer of two alpha and two beta chains.

It catalyses the reaction (1S,2R)-1-C-(indol-3-yl)glycerol 3-phosphate + L-serine = D-glyceraldehyde 3-phosphate + L-tryptophan + H2O. It participates in amino-acid biosynthesis; L-tryptophan biosynthesis; L-tryptophan from chorismate: step 5/5. In terms of biological role, the alpha subunit is responsible for the aldol cleavage of indoleglycerol phosphate to indole and glyceraldehyde 3-phosphate. The polypeptide is Tryptophan synthase alpha chain (Solidesulfovibrio magneticus (strain ATCC 700980 / DSM 13731 / RS-1) (Desulfovibrio magneticus)).